A 68-amino-acid polypeptide reads, in one-letter code: MAQANVVLPAPNGKLTEELMGLAIHKLSQLGTIEGDEIGVYTADVPEGRPPGFYFEFRANIIPYLGRR.

In Mycobacterium phage D29 (Mycobacteriophage D29), this protein is Gene 42 protein (42).